The primary structure comprises 229 residues: Large ribosomal subunit protein uL1 (229 aa).

This sequence belongs to the universal ribosomal protein uL1 family. Part of the 50S ribosomal subunit.

Binds directly to 23S rRNA. The L1 stalk is quite mobile in the ribosome, and is involved in E site tRNA release. In terms of biological role, protein L1 is also a translational repressor protein, it controls the translation of the L11 operon by binding to its mRNA. The protein is Large ribosomal subunit protein uL1 of Lactococcus lactis subsp. cremoris (strain MG1363).